Reading from the N-terminus, the 102-residue chain is NADH-quinone oxidoreductase subunit K (102 aa).

The next 3 helical transmembrane spans lie at 6-26, 30-50, and 62-82; these read LEHG…GVMV, LLFM…AFVL, and VMFI…LAIV.

Belongs to the complex I subunit 4L family. NDH-1 is composed of 14 different subunits. Subunits NuoA, H, J, K, L, M, N constitute the membrane sector of the complex.

The protein resides in the cell inner membrane. The enzyme catalyses a quinone + NADH + 5 H(+)(in) = a quinol + NAD(+) + 4 H(+)(out). NDH-1 shuttles electrons from NADH, via FMN and iron-sulfur (Fe-S) centers, to quinones in the respiratory chain. The immediate electron acceptor for the enzyme in this species is believed to be ubiquinone. Couples the redox reaction to proton translocation (for every two electrons transferred, four hydrogen ions are translocated across the cytoplasmic membrane), and thus conserves the redox energy in a proton gradient. The polypeptide is NADH-quinone oxidoreductase subunit K (Acinetobacter baumannii (strain AB307-0294)).